Reading from the N-terminus, the 182-residue chain is Large ribosomal subunit protein uL22 (182 aa).

Positions 155–182 (SGVDGAKQGKKKKKTDGVEKATTKRQKQ) are disordered.

This sequence belongs to the universal ribosomal protein uL22 family.

The protein is Large ribosomal subunit protein uL22 (RpL17) of Carabus granulatus (Ground beetle).